A 313-amino-acid chain; its full sequence is Porphobilinogen deaminase (313 aa).

Cys-242 is subject to S-(dipyrrolylmethanemethyl)cysteine.

This sequence belongs to the HMBS family. Monomer. Dipyrromethane serves as cofactor.

The enzyme catalyses 4 porphobilinogen + H2O = hydroxymethylbilane + 4 NH4(+). Its pathway is porphyrin-containing compound metabolism; protoporphyrin-IX biosynthesis; coproporphyrinogen-III from 5-aminolevulinate: step 2/4. Tetrapolymerization of the monopyrrole PBG into the hydroxymethylbilane pre-uroporphyrinogen in several discrete steps. This Pseudomonas putida (strain GB-1) protein is Porphobilinogen deaminase.